A 664-amino-acid chain; its full sequence is tRNA (carboxymethyluridine(34)-5-O)-methyltransferase ALKBH8 (664 aa).

Positions 43 to 120 (QSLVVANGGL…QKIILYLNFV (78 aa)) constitute an RRM domain. Residues 220–337 (KPDQMTINQY…RTSFTFRKVR (118 aa)) enclose the Fe2OG dioxygenase domain. Position 227-229 (227-229 (NQY)) interacts with 2-oxoglutarate. H238 and D240 together coordinate Fe cation. H242 is a Zn(2+) binding site. Residue H292 coordinates Fe cation. 2 residues coordinate 2-oxoglutarate: R328 and R334. Zn(2+) contacts are provided by C341, C343, and C349. Residues 411–664 (ADIGCGNGKY…GNWCVILQKA (254 aa)) are methyltransferase domain. Residues 516–575 (KYLKGNRNSQGKKEEMNSDTSVQRSLVEQMPDMGSRDSASSVPRINDSQEGGCNSRQVSN) form a disordered region. The segment covering 552-575 (DSASSVPRINDSQEGGCNSRQVSN) has biased composition (polar residues).

The protein belongs to the alkB family. In terms of assembly, interacts with TRMT112. Fe(2+) is required as a cofactor.

Its subcellular location is the cytoplasm. The protein localises to the nucleus. It carries out the reaction 5-(carboxymethyl)uridine(34) in tRNA + S-adenosyl-L-methionine = 5-(2-methoxy-2-oxoethyl)uridine(34) in tRNA + S-adenosyl-L-homocysteine. In terms of biological role, catalyzes the methylation of 5-carboxymethyl uridine to 5-methylcarboxymethyl uridine at the wobble position of the anticodon loop in tRNA via its methyltransferase domain. Catalyzes the last step in the formation of 5-methylcarboxymethyl uridine at the wobble position of the anticodon loop in target tRNA. Has a preference for tRNA(Arg) and tRNA(Glu), and does not bind tRNA(Lys). Binds tRNA and catalyzes the iron and alpha-ketoglutarate dependent hydroxylation of 5-methylcarboxymethyl uridine at the wobble position of the anticodon loop in tRNA via its dioxygenase domain, giving rise to 5-(S)-methoxycarbonylhydroxymethyluridine; has a preference for tRNA(Gly). Required for normal survival after DNA damage. May inhibit apoptosis and promote cell survival and angiogenesis. The protein is tRNA (carboxymethyluridine(34)-5-O)-methyltransferase ALKBH8 (ALKBH8) of Macaca fascicularis (Crab-eating macaque).